Reading from the N-terminus, the 272-residue chain is Ribonuclease 3 (272 aa).

Over residues 1–20 (MTDDVTNVEQPSTASEQQPQ) the composition is skewed to polar residues. Positions 1–38 (MTDDVTNVEQPSTASEQQPQDVPAAEPSAAKKRRANKA) are disordered. The 128-residue stretch at 44 to 171 (AAAIEQRLGH…VIGAIYLDGG (128 aa)) folds into the RNase III domain. A Mg(2+)-binding site is contributed by Glu-84. Asp-88 is an active-site residue. Mg(2+) is bound by residues Asp-157 and Glu-160. The active site involves Glu-160. The DRBM domain occupies 196-265 (DPKTVLQEWA…ASAMLAREGV (70 aa)).

It belongs to the ribonuclease III family. Homodimer. It depends on Mg(2+) as a cofactor.

The protein resides in the cytoplasm. It carries out the reaction Endonucleolytic cleavage to 5'-phosphomonoester.. Functionally, digests double-stranded RNA. Involved in the processing of primary rRNA transcript to yield the immediate precursors to the large and small rRNAs (23S and 16S). Processes some mRNAs, and tRNAs when they are encoded in the rRNA operon. Processes pre-crRNA and tracrRNA of type II CRISPR loci if present in the organism. This chain is Ribonuclease 3, found in Rhodopseudomonas palustris (strain ATCC BAA-98 / CGA009).